The primary structure comprises 505 residues: Cyanidin 3-O-glucoside 7-O-glucosyltransferase (acyl-glucose) (505 aa).

Residues 1 to 25 (MCPSFLVTLLLLQLSSLVVVLVVWA) form the signal peptide. Residues Gln-52, His-152, and 197 to 198 (NE) contribute to the a beta-D-glucoside site. Catalysis depends on Glu-198, which acts as the Proton donor. An intrachain disulfide couples Cys-217 to Cys-225. N-linked (GlcNAc...) asparagine glycosylation is found at Asn-224, Asn-229, and Asn-324. Positions 341 and 403 each coordinate a beta-D-glucoside. Glu-403 serves as the catalytic Nucleophile. 2 N-linked (GlcNAc...) asparagine glycosylation sites follow: Asn-411 and Asn-437. A beta-D-glucoside is bound by residues Trp-447 and Tyr-463. An N-linked (GlcNAc...) asparagine glycan is attached at Asn-494.

It belongs to the glycosyl hydrolase 1 family.

It is found in the vacuole. The catalysed reaction is 1-O-(4-hydroxy-3-methoxybenzoyl)-beta-D-glucose + cyanidin 3-O-beta-D-glucoside = cyanidin 3,7-di-O-beta-D-glucoside + vanillate. It participates in pigment biosynthesis; anthocyanin biosynthesis. In terms of biological role, beta-glycosidase that catalyzes the transfer of glucose moiety to anthocyanidin 3-glucoside at the 7 position. Anthocyanins are ubiquitous colored pigments that are responsible for variations in petal color. The protein is Cyanidin 3-O-glucoside 7-O-glucosyltransferase (acyl-glucose) (AA7GT) of Delphinium grandiflorum (Siberian larkspur).